A 249-amino-acid chain; its full sequence is Probable transcriptional regulatory protein LBL_2537 (249 aa).

The protein belongs to the TACO1 family.

Its subcellular location is the cytoplasm. This is Probable transcriptional regulatory protein LBL_2537 from Leptospira borgpetersenii serovar Hardjo-bovis (strain L550).